A 369-amino-acid polypeptide reads, in one-letter code: Protein RecA (369 aa).

77–84 provides a ligand contact to ATP; that stretch reads GPESSGKT.

Belongs to the RecA family.

The protein localises to the cytoplasm. Its function is as follows. Can catalyze the hydrolysis of ATP in the presence of single-stranded DNA, the ATP-dependent uptake of single-stranded DNA by duplex DNA, and the ATP-dependent hybridization of homologous single-stranded DNAs. It interacts with LexA causing its activation and leading to its autocatalytic cleavage. This is Protein RecA from Corynebacterium pseudotuberculosis (strain C231).